The chain runs to 229 residues: Cytidylate kinase (229 aa).

12 to 20 provides a ligand contact to ATP; sequence GPSGSGKGT.

Belongs to the cytidylate kinase family. Type 1 subfamily.

The protein localises to the cytoplasm. The catalysed reaction is CMP + ATP = CDP + ADP. The enzyme catalyses dCMP + ATP = dCDP + ADP. This chain is Cytidylate kinase, found in Azotobacter vinelandii (strain DJ / ATCC BAA-1303).